The following is a 297-amino-acid chain: N-acetylneuraminate lyase (297 aa).

Positions 47 and 48 each coordinate aceneuramate. Y137 serves as the catalytic Proton donor. K165 serves as the catalytic Schiff-base intermediate with substrate. Residues T167, G189, D191, E192, and S208 each contribute to the aceneuramate site.

This sequence belongs to the DapA family. NanA subfamily. In terms of assembly, homotetramer.

Its subcellular location is the cytoplasm. The catalysed reaction is aceneuramate = aldehydo-N-acetyl-D-mannosamine + pyruvate. It participates in amino-sugar metabolism; N-acetylneuraminate degradation; D-fructose 6-phosphate from N-acetylneuraminate: step 1/5. Catalyzes the reversible aldol cleavage of N-acetylneuraminic acid (sialic acid; Neu5Ac) to form pyruvate and N-acetylmannosamine (ManNAc) via a Schiff base intermediate. This is N-acetylneuraminate lyase from Salmonella agona (strain SL483).